A 439-amino-acid chain; its full sequence is GTPase Der (439 aa).

2 consecutive EngA-type G domains span residues 4–168 (PIVA…KDDE) and 177–352 (INIA…DNYN). GTP is bound by residues 10–17 (GRPNVGKS), 57–61 (DTGGI), 120–123 (NKID), 183–190 (GKPNVGKS), 230–234 (DTAGL), and 295–298 (NKWD). The 85-residue stretch at 353 to 437 (KRVKTGVLND…GIKSEFRERK (85 aa)) folds into the KH-like domain.

This sequence belongs to the TRAFAC class TrmE-Era-EngA-EngB-Septin-like GTPase superfamily. EngA (Der) GTPase family. In terms of assembly, associates with the 50S ribosomal subunit.

Functionally, GTPase that plays an essential role in the late steps of ribosome biogenesis. The sequence is that of GTPase Der from Clostridium botulinum (strain ATCC 19397 / Type A).